Reading from the N-terminus, the 529-residue chain is Cytochrome P450 monooxygenase ausG (529 aa).

The helical transmembrane segment at 31–51 (LLVVCGLPGLLLLFFVTAILL) threads the bilayer. Residue cysteine 470 coordinates heme.

This sequence belongs to the cytochrome P450 family. It depends on heme as a cofactor.

It localises to the membrane. Its pathway is secondary metabolite biosynthesis; terpenoid biosynthesis. In terms of biological role, cytochrome P450 monooxygenase; part of the gene cluster that mediates the biosynthesis of calidodehydroaustin, a fungal meroterpenoid. The first step of the pathway is the synthesis of 3,5-dimethylorsellinic acid by the polyketide synthase ausA. 3,5-dimethylorsellinic acid is then prenylated by the polyprenyl transferase ausN. Further epoxidation by the FAD-dependent monooxygenase ausM and cyclization by the probable terpene cyclase ausL lead to the formation of protoaustinoid A. Protoaustinoid A is then oxidized to spiro-lactone preaustinoid A3 by the combined action of the FAD-binding monooxygenases ausB and ausC, and the dioxygenase ausE. Acid-catalyzed keto-rearrangement and ring contraction of the tetraketide portion of preaustinoid A3 by ausJ lead to the formation of preaustinoid A4. The aldo-keto reductase ausK, with the help of ausH, is involved in the next step by transforming preaustinoid A4 into isoaustinone which is in turn hydroxylated by the P450 monooxygenase ausI to form austinolide. The cytochrome P450 monooxygenase ausG modifies austinolide to austinol. Austinol is further acetylated to austin by the O-acetyltransferase ausP, which spontaneously changes to dehydroaustin. The cytochrome P450 monooxygenase ausR then converts dehydroaustin is into 7-dehydrodehydroaustin. The hydroxylation catalyzed by ausR permits the O-acetyltransferase ausQ to add an additional acetyl group to the molecule, leading to the formation of acetoxydehydroaustin. The short chain dehydrogenase ausT catalyzes the reduction of the double bond present between carbon atoms 1 and 2 to convert 7-dehydrodehydroaustin into 1,2-dihydro-7-hydroxydehydroaustin. AusQ catalyzes not only an acetylation reaction but also the addition of the PKS ausV diketide product to 1,2-dihydro-7-hydroxydehydroaustin, forming precalidodehydroaustin. Finally, the iron/alpha-ketoglutarate-dependent dioxygenase converts precalidodehydroaustin into calidodehydroaustin. The polypeptide is Cytochrome P450 monooxygenase ausG (Aspergillus calidoustus).